The primary structure comprises 111 residues: Iron-sulfur cluster assembly protein CyaY (111 aa).

Belongs to the frataxin family.

Its function is as follows. Involved in iron-sulfur (Fe-S) cluster assembly. May act as a regulator of Fe-S biogenesis. In Cupriavidus taiwanensis (strain DSM 17343 / BCRC 17206 / CCUG 44338 / CIP 107171 / LMG 19424 / R1) (Ralstonia taiwanensis (strain LMG 19424)), this protein is Iron-sulfur cluster assembly protein CyaY.